The sequence spans 373 residues: tRNA-specific 2-thiouridylase MnmA (373 aa).

ATP is bound by residues 12-19 (GMSGGVDS) and Met38. The segment at 98–100 (NPD) is interaction with target base in tRNA. Cys103 serves as the catalytic Nucleophile. Residues Cys103 and Cys200 are joined by a disulfide bond. Gly127 contributes to the ATP binding site. The interaction with tRNA stretch occupies residues 150 to 152 (KDQ). The Cysteine persulfide intermediate role is filled by Cys200. Positions 312-313 (RY) are interaction with tRNA.

Belongs to the MnmA/TRMU family.

It is found in the cytoplasm. It catalyses the reaction S-sulfanyl-L-cysteinyl-[protein] + uridine(34) in tRNA + AH2 + ATP = 2-thiouridine(34) in tRNA + L-cysteinyl-[protein] + A + AMP + diphosphate + H(+). Functionally, catalyzes the 2-thiolation of uridine at the wobble position (U34) of tRNA, leading to the formation of s(2)U34. This Streptococcus pneumoniae (strain JJA) protein is tRNA-specific 2-thiouridylase MnmA.